We begin with the raw amino-acid sequence, 351 residues long: ATP-dependent 6-phosphofructokinase subunit gamma (351 aa).

Heterododecamer of 4 alpha, 4 beta and 4 gamma chains. The gamma chain bridges the N-terminal halves of the alpha and beta subunits.

It localises to the cytoplasm. Its pathway is carbohydrate degradation; glycolysis; D-glyceraldehyde 3-phosphate and glycerone phosphate from D-glucose: step 3/4. In terms of biological role, structural subunit of pyrophosphate--fructose 6-phosphate 1-phosphotransferase. Not required for catalytic activity. Fine-tunes allosteric regulation of the ATP-PFK by ATP, fructose 2,6-bisphosphate and AMP. This chain is ATP-dependent 6-phosphofructokinase subunit gamma (PFK3), found in Komagataella phaffii (strain GS115 / ATCC 20864) (Yeast).